Here is a 404-residue protein sequence, read N- to C-terminus: Phosphopentomutase (404 aa).

Positions 10, 303, 308, 344, 345, and 356 each coordinate Mn(2+).

Belongs to the phosphopentomutase family. Requires Mn(2+) as cofactor.

Its subcellular location is the cytoplasm. The enzyme catalyses 2-deoxy-alpha-D-ribose 1-phosphate = 2-deoxy-D-ribose 5-phosphate. The catalysed reaction is alpha-D-ribose 1-phosphate = D-ribose 5-phosphate. The protein operates within carbohydrate degradation; 2-deoxy-D-ribose 1-phosphate degradation; D-glyceraldehyde 3-phosphate and acetaldehyde from 2-deoxy-alpha-D-ribose 1-phosphate: step 1/2. Functionally, isomerase that catalyzes the conversion of deoxy-ribose 1-phosphate (dRib-1-P) and ribose 1-phosphate (Rib-1-P) to deoxy-ribose 5-phosphate (dRib-5-P) and ribose 5-phosphate (Rib-5-P), respectively. This is Phosphopentomutase from Shewanella baltica (strain OS185).